Here is a 121-residue protein sequence, read N- to C-terminus: Fluoride-specific ion channel FluC 2 (121 aa).

A run of 4 helical transmembrane segments spans residues 3–23, 31–51, 64–84, and 92–112; these read YLFI…LSFI, IGTF…GTLA, GITT…FELV, and FILL…LCFL. Na(+) is bound by residues Gly71 and Thr74.

This sequence belongs to the fluoride channel Fluc/FEX (TC 1.A.43) family.

The protein resides in the cell membrane. The enzyme catalyses fluoride(in) = fluoride(out). With respect to regulation, na(+) is not transported, but it plays an essential structural role and its presence is essential for fluoride channel function. In terms of biological role, fluoride-specific ion channel. Important for reducing fluoride concentration in the cell, thus reducing its toxicity. In Staphylococcus saprophyticus subsp. saprophyticus (strain ATCC 15305 / DSM 20229 / NCIMB 8711 / NCTC 7292 / S-41), this protein is Fluoride-specific ion channel FluC 2.